Consider the following 150-residue polypeptide: MTDLGQAGESLVAAWLEQQGGKILQQRWRSPWGEIDLITHFPDTKIIAFVEVKTRSGGNWDQGGLLAVNARKQEKIWQTANHFLASQPQWSDWNCRFDVMIVFSQGSVPTGENAEGKFANLPTNFQMGQTIVWQGYRLRLEQYLTDAFGG.

The protein belongs to the UPF0102 family.

This chain is UPF0102 protein sll0189, found in Synechocystis sp. (strain ATCC 27184 / PCC 6803 / Kazusa).